The chain runs to 545 residues: 2-succinyl-5-enolpyruvyl-6-hydroxy-3-cyclohexene-1-carboxylate synthase (545 aa).

Belongs to the TPP enzyme family. MenD subfamily. Homodimer. It depends on Mg(2+) as a cofactor. Mn(2+) serves as cofactor. Requires thiamine diphosphate as cofactor.

The enzyme catalyses isochorismate + 2-oxoglutarate + H(+) = 5-enolpyruvoyl-6-hydroxy-2-succinyl-cyclohex-3-ene-1-carboxylate + CO2. The protein operates within quinol/quinone metabolism; 1,4-dihydroxy-2-naphthoate biosynthesis; 1,4-dihydroxy-2-naphthoate from chorismate: step 2/7. It participates in quinol/quinone metabolism; menaquinone biosynthesis. Catalyzes the thiamine diphosphate-dependent decarboxylation of 2-oxoglutarate and the subsequent addition of the resulting succinic semialdehyde-thiamine pyrophosphate anion to isochorismate to yield 2-succinyl-5-enolpyruvyl-6-hydroxy-3-cyclohexene-1-carboxylate (SEPHCHC). This chain is 2-succinyl-5-enolpyruvyl-6-hydroxy-3-cyclohexene-1-carboxylate synthase, found in Nocardia farcinica (strain IFM 10152).